Consider the following 384-residue polypeptide: N-acetyldiaminopimelate deacetylase (384 aa).

Residue D74 is part of the active site. E133 functions as the Proton acceptor in the catalytic mechanism.

This sequence belongs to the peptidase M20A family. N-acetyldiaminopimelate deacetylase subfamily.

The catalysed reaction is N-acetyl-(2S,6S)-2,6-diaminopimelate + H2O = (2S,6S)-2,6-diaminopimelate + acetate. The protein operates within amino-acid biosynthesis; L-lysine biosynthesis via DAP pathway; LL-2,6-diaminopimelate from (S)-tetrahydrodipicolinate (acetylase route): step 3/3. Catalyzes the conversion of N-acetyl-diaminopimelate to diaminopimelate and acetate. In Pediococcus pentosaceus (strain ATCC 25745 / CCUG 21536 / LMG 10740 / 183-1w), this protein is N-acetyldiaminopimelate deacetylase.